Reading from the N-terminus, the 1962-residue chain is Sodium channel protein type 10 subunit alpha (1962 aa).

The Cytoplasmic portion of the chain corresponds to 1-125 (MEFPFGSLET…FNLIRRTAIK (125 aa)). The disordered stretch occupies residues 32-56 (QAAKKAKGKHREQKDQEEKPRPQLD). The segment covering 33-42 (AAKKAKGKHR) has biased composition (basic residues). The span at 43-55 (EQKDQEEKPRPQL) shows a compositional bias: basic and acidic residues. Residues 116–414 (FNLIRRTAIK…VTMAYEEQNQ (299 aa)) form an I repeat. The chain crosses the membrane as a helical span at residues 126–149 (VSVHSWFSLFITVTILVNCVGMTQ). The Extracellular portion of the chain corresponds to 150–154 (TELPD). A helical membrane pass occupies residues 155-174 (RIEYVFTVIYTFEALIKILA). Over 175 to 187 (RGFCLNEFAYLRD) the chain is Cytoplasmic. Residues 188–206 (PWDWLDFSVITLAYIGEAT) traverse the membrane as a helical segment. Residues 207 to 212 (ALRGIS) are Extracellular-facing. The helical; Voltage-sensor transmembrane segment at 213–232 (GLRTFRVLRALKTVSVIPGL) threads the bilayer. Over 233–248 (KVIVGALIHSVRKLAD) the chain is Cytoplasmic. Residues 249 to 272 (VTILTVFCLSVFALVGLQLFKGNL) form a helical membrane-spanning segment. At 273-350 (KNKCVKNCAA…PDFNYTSFDS (78 aa)) the chain is on the extracellular side. Cysteine 276 and cysteine 328 form a disulfide bridge. N-linked (GlcNAc...) asparagine glycans are attached at residues asparagine 284, asparagine 288, asparagine 321, and asparagine 344. Positions 351-375 (FAWAFLSLFRLMTQDSWERLYQQTL) form an intramembrane region, pore-forming. Over 376–382 (RASGKMY) the chain is Extracellular. The helical transmembrane segment at 383-408 (MVFFVLVIFLGSFYLVNLILAVVTMA) threads the bilayer. Over 409–668 (YEEQNQATID…TWVKLKTVLF (260 aa)) the chain is Cytoplasmic. A phosphoserine mark is found at serine 450, serine 453, serine 476, and serine 488. Over residues 452–463 (HSCNGSPLPSKN) the composition is skewed to polar residues. 2 disordered regions span residues 452–493 (HSCN…PYNQ) and 521–586 (LDTS…TGEL). Phosphoserine occurs at positions 621 and 624. An II repeat occupies 656–920 (CCPTWVKLKT…DEDGEVNNLQ (265 aa)). The helical transmembrane segment at 669–693 (GIVTDPFAELTTTLCIVVNTVFMAM) threads the bilayer. Residues 694–704 (EHHGMSSAFEA) are Extracellular-facing. A helical transmembrane segment spans residues 705–728 (MLQIGNIVFTVFFTAEMVFKIIAF). Over 729 to 736 (DPYYYFQK) the chain is Cytoplasmic. A helical membrane pass occupies residues 737-756 (RWNIFDCIIVTVSLIELGAA). Over 757–762 (RKGSLS) the chain is Extracellular. Residues 763 to 782 (VLRTFRLLRVFKLAKSWPTL) form a helical; Voltage-sensor membrane-spanning segment. The Cytoplasmic portion of the chain corresponds to 783 to 798 (NTLIKIIGNSVGALGN). Residues 799-819 (LTIILAIIVFVFALVGKQLLG) form a helical membrane-spanning segment. Topologically, residues 820–843 (ENYRDNRRNISAPNEEWPRWHMHD) are extracellular. N-linked (GlcNAc...) asparagine glycosylation occurs at asparagine 828. The segment at residues 844 to 864 (FFHSFLIVFRILCGEWIENMW) is an intramembrane region (pore-forming). At 865 to 873 (ACMEVGQKS) the chain is on the extracellular side. A disulfide bridge connects residues cysteine 866 and cysteine 875. The helical transmembrane segment at 874 to 899 (ICLILFLTVMVLGNLVVLNLFTALLL) threads the bilayer. Residues 900–1154 (NSFSADNLAT…GWQVRKTCYR (255 aa)) are Cytoplasmic-facing. Over residues 1015 to 1026 (LDDLEEDGEEDS) the composition is skewed to acidic residues. The tract at residues 1015–1035 (LDDLEEDGEEDSQSSQQEVIL) is disordered. The stretch at 1147–1456 (QVRKTCYRIV…KKYYNAMKKL (310 aa)) is one III repeat. Residues 1155–1178 (IVEHSWFESFIIFMILLSSGSLAF) form a helical membrane-spanning segment. At 1179-1191 (EDYHLDQKPTVKA) the chain is on the extracellular side. The chain crosses the membrane as a helical span at residues 1192-1217 (LLEYTDRMFTFIFVLEMLLKWVAYGF). Topologically, residues 1218–1223 (KKYFTN) are cytoplasmic. The helical transmembrane segment at 1224-1245 (AWCWLDFLIVNISLISLIAKIL) threads the bilayer. Residues 1246–1249 (QYSD) are Extracellular-facing. Residues 1250–1271 (VASIKALRTLRALRPLRALSRF) form a helical; Voltage-sensor membrane-spanning segment. The Cytoplasmic segment spans residues 1272-1290 (EGMRVVVDALVGAIPSIMN). A helical transmembrane segment spans residues 1291-1318 (VLLVCLIFWLIFSTMGVNFFAGKFGRCI). N-linked (GlcNAc...) asparagine glycosylation is found at asparagine 1319, asparagine 1335, and asparagine 1343. Topologically, residues 1319-1360 (NKTNEYFSLVPLSIVNNISDCKYQNHTGSFFWVNVKVNFDNV) are extracellular. The pore-forming intramembrane region spans 1361–1382 (AMGYLALLQVATFKGWMDIMYA). The Extracellular segment spans residues 1383–1398 (AVDARDVNLQPKWEDN). Residues 1399–1425 (VYMYLYFVIFIIFGGFFTLNLFVGVII) traverse the membrane as a helical segment. Over 1426–1478 (DNFNQQKKKLGGQDIFMTEEQKKYYNAMKKLGSKKPQKPIPRPLNKYQGFVFD) the chain is Cytoplasmic. Position 1458 is a phosphoserine; by PKC (serine 1458). The stretch at 1465–1764 (IPRPLNKYQG…WEKFDPEATQ (300 aa)) is one IV repeat. Residues 1479-1502 (IVTKQAFDIVIMVLICLNMITMMV) traverse the membrane as a helical segment. Residues 1503–1513 (ETDEQSAEKTK) lie on the Extracellular side of the membrane. A helical transmembrane segment spans residues 1514-1537 (ILNKINQFFVAVFTGECVMKMFAL). Over 1538–1543 (RHYYFT) the chain is Cytoplasmic. The chain crosses the membrane as a helical span at residues 1544–1567 (NGWNVFDFIVVVLSIGSLVFSVIL). Residues 1568–1579 (TSLENYFSPTLF) lie on the Extracellular side of the membrane. A helical; Voltage-sensor transmembrane segment spans residues 1580–1601 (RVIRLARIGRILRLIRAAKGIR). Topologically, residues 1602–1616 (TLLFALMMSLPALFN) are cytoplasmic. A helical transmembrane segment spans residues 1617-1639 (IGLLLFLVMFIYSIFGMASFPHV). Over 1640 to 1653 (SWEAGIDDMFNFQT) the chain is Extracellular. An intramembrane region (pore-forming) is located at residues 1654-1676 (FANSMLCLFQITTSAGWDGLLSP). The Extracellular portion of the chain corresponds to 1677-1704 (ILNTGPPYCDPNLPNSNGSRGNCGSPAV). N-linked (GlcNAc...) asparagine glycosylation occurs at asparagine 1693. A helical membrane pass occupies residues 1705–1729 (GILFFTTYIIISFLIVVNMYIAVIL). The Cytoplasmic segment spans residues 1730 to 1962 (ENFNVATQES…TSKKVTAPGP (233 aa)). An IQ domain is found at 1858–1887 (EDISATVIQKAYRSYVLHRSMTISNPPAVP). The segment at 1914–1962 (KSETASAASFPPSYDSVTRGLSDQINMSTSSSMQNEDEGTSKKVTAPGP) is disordered. The segment covering 1928-1947 (DSVTRGLSDQINMSTSSSMQ) has biased composition (polar residues).

This sequence belongs to the sodium channel (TC 1.A.1.10) family. Nav1.8/SCN10A subfamily. In terms of assembly, the channel consists of an ion conducting pore forming alpha-subunit regulated by one or more associated auxiliary subunits SCN1B, SCN2B and SCN3B; electrophysiological properties may vary depending on the type of the associated beta subunits. Found in a number of complexes with PRX, DYNLT1 and PDZD2. Interacts with proteins such as FSTL1, PRX, DYNLT1, PDZD2, S100A10 and many others. Interacts with NEDD4 and NEDD4L. Ubiquitinated by NEDD4L; which promotes its endocytosis. Post-translationally, phosphorylation at Ser-1458 by PKC in a highly conserved cytoplasmic loop slows inactivation of the sodium channel and reduces peak sodium currents. In terms of processing, lacks the cysteine which covalently binds the conotoxin GVIIJ. This cysteine (position 825) is speculated in other sodium channel subunits alpha to be implied in covalent binding with the sodium channel subunit beta-2 or beta-4. Expressed in nodose ganglia, but not in cortex, hippocampus, cerebellum, liver, heart and skeletal muscle.

The protein resides in the cell membrane. It catalyses the reaction Na(+)(in) = Na(+)(out). Its function is as follows. Tetrodotoxin-resistant channel that mediates the voltage-dependent sodium ion permeability of excitable membranes. Assuming opened or closed conformations in response to the voltage difference across the membrane, the protein forms a sodium-selective channel through which sodium ions may pass in accordance with their electrochemical gradient. Plays a role in neuropathic pain mechanisms. This is Sodium channel protein type 10 subunit alpha (SCN10A) from Canis lupus familiaris (Dog).